We begin with the raw amino-acid sequence, 286 residues long: ATP phosphoribosyltransferase (286 aa).

Belongs to the ATP phosphoribosyltransferase family. Long subfamily. The cofactor is Mg(2+).

The protein localises to the cytoplasm. It catalyses the reaction 1-(5-phospho-beta-D-ribosyl)-ATP + diphosphate = 5-phospho-alpha-D-ribose 1-diphosphate + ATP. Its pathway is amino-acid biosynthesis; L-histidine biosynthesis; L-histidine from 5-phospho-alpha-D-ribose 1-diphosphate: step 1/9. With respect to regulation, feedback inhibited by histidine. Catalyzes the condensation of ATP and 5-phosphoribose 1-diphosphate to form N'-(5'-phosphoribosyl)-ATP (PR-ATP). Has a crucial role in the pathway because the rate of histidine biosynthesis seems to be controlled primarily by regulation of HisG enzymatic activity. The polypeptide is ATP phosphoribosyltransferase (Arthrobacter sp. (strain FB24)).